A 513-amino-acid polypeptide reads, in one-letter code: MPRFALLSVSDKTGLVDFARQLVDRFQFQIVSSGGTAKQLLEAGIPVTKVAEHTGSPEILGGRVKTLHPRIHGGILARRDREEDQADLAANNIQPFDLVVVNLYPFEATIARPEVTLADAIEQIDIGGPAMVRASAKNHAHLTILTNPSQYEPYLTALADGEGQIPLAFRQQCALAAFQHTAAYDAAIATYLAEQFEATSDRLQLSAQPVQVLRYGENPHQAATWYQTGATASGWAAAQQLQGKELSYNNLVDLEAARQIIAEFPADGPAAAAILKHNNPCGVATAEALSDAYQKAFDADSVSAFGGIVALNRAIDAATATAMTGTFLECIVAPSVEPAAAEILAAKKNLRVLTLADFNSGPQQTVRSIAGGFLVQDSDDQLETVDAWQVVTEQQPSEADWQELLFAWKVVKHVKSNAIAVTANGVTLGIGAGQMNRVGSVKIALEQAGDRAQGAILASDGFFPFDDSVRTAAAAGIRAIVQPGGSLRDADSIAAANELGLVMVFTGTRHFLH.

An MGS-like domain is found at 1-146; that stretch reads MPRFALLSVS…KNHAHLTILT (146 aa).

The protein belongs to the PurH family.

It carries out the reaction (6R)-10-formyltetrahydrofolate + 5-amino-1-(5-phospho-beta-D-ribosyl)imidazole-4-carboxamide = 5-formamido-1-(5-phospho-D-ribosyl)imidazole-4-carboxamide + (6S)-5,6,7,8-tetrahydrofolate. It catalyses the reaction IMP + H2O = 5-formamido-1-(5-phospho-D-ribosyl)imidazole-4-carboxamide. It participates in purine metabolism; IMP biosynthesis via de novo pathway; 5-formamido-1-(5-phospho-D-ribosyl)imidazole-4-carboxamide from 5-amino-1-(5-phospho-D-ribosyl)imidazole-4-carboxamide (10-formyl THF route): step 1/1. Its pathway is purine metabolism; IMP biosynthesis via de novo pathway; IMP from 5-formamido-1-(5-phospho-D-ribosyl)imidazole-4-carboxamide: step 1/1. This is Bifunctional purine biosynthesis protein PurH from Synechococcus elongatus (strain ATCC 33912 / PCC 7942 / FACHB-805) (Anacystis nidulans R2).